The primary structure comprises 97 residues: Secreted transmembrane peptide 4 (97 aa).

An N-terminal signal peptide occupies residues 1–33 (MTKNMTKKKMGLMSPNIAAFVLPMLLVLFTISS). An SCOOP motif motif is present at residues 54-67 (IVFTPPSSSCGGSP). A SxS motif essential for MIK2 binding motif is present at residues 60-62 (SSS). The interval 75–97 (WMPRRPCRRTRPPGTNIPVSQSP) is disordered.

This sequence belongs to the serine rich endogenous peptide (SCOOP) phytocytokine family. In terms of assembly, interacts with MIK2 (via extracellular leucine-rich repeat domain); this interaction triggers the formation of complex between MIK2 and the BAK1/SERK3 and SERK4 coreceptors, and subsequent BAK1 activation by phosphorylation. In terms of tissue distribution, mostly expressed in leaves and stems, and, to a lower extent, in roots, siliques, seeds and flowers.

Its subcellular location is the cell membrane. It localises to the secreted. The protein resides in the extracellular space. The protein localises to the apoplast. Its function is as follows. Brassicaceae-specific phytocytokine (plant endogenous peptide released into the apoplast) perceived by MIK2 in a BAK1/SERK3 and SERK4 coreceptors-dependent manner, that modulates various physiological and antimicrobial processes including growth prevention and reactive oxygen species (ROS) response regulation. Prevents general growth and development. This chain is Secreted transmembrane peptide 4, found in Arabidopsis thaliana (Mouse-ear cress).